Here is a 331-residue protein sequence, read N- to C-terminus: L-lactate dehydrogenase A chain (331 aa).

NAD(+) is bound by residues 29-57 (GMVG…MEDK) and R98. Substrate is bound by residues R105, N137, and R168. N137 contributes to the NAD(+) binding site. H192 serves as the catalytic Proton acceptor. Position 247 (T247) interacts with substrate.

This sequence belongs to the LDH/MDH superfamily. LDH family. Homotetramer.

The protein localises to the cytoplasm. The catalysed reaction is (S)-lactate + NAD(+) = pyruvate + NADH + H(+). The protein operates within fermentation; pyruvate fermentation to lactate; (S)-lactate from pyruvate: step 1/1. Interconverts simultaneously and stereospecifically pyruvate and lactate with concomitant interconversion of NADH and NAD(+). In Champsocephalus gunnari (Mackerel icefish), this protein is L-lactate dehydrogenase A chain (ldha).